Reading from the N-terminus, the 444-residue chain is tRNA modification GTPase MnmE (444 aa).

(6S)-5-formyl-5,6,7,8-tetrahydrofolate contacts are provided by arginine 28, glutamate 86, and arginine 126. A TrmE-type G domain is found at 224–368; that stretch reads GFCVVLAGAP…LLDAIQGSAA (145 aa). A K(+)-binding site is contributed by asparagine 234. Residues 234 to 239, 253 to 259, and 278 to 281 each bind GTP; these read NAGKST, SDIPGTT, and DTAG. Mg(2+) is bound at residue serine 238. Positions 253, 255, and 258 each coordinate K(+). Threonine 259 is a binding site for Mg(2+). Lysine 444 lines the (6S)-5-formyl-5,6,7,8-tetrahydrofolate pocket.

It belongs to the TRAFAC class TrmE-Era-EngA-EngB-Septin-like GTPase superfamily. TrmE GTPase family. Homodimer. Heterotetramer of two MnmE and two MnmG subunits. It depends on K(+) as a cofactor.

The protein resides in the cytoplasm. Its function is as follows. Exhibits a very high intrinsic GTPase hydrolysis rate. Involved in the addition of a carboxymethylaminomethyl (cmnm) group at the wobble position (U34) of certain tRNAs, forming tRNA-cmnm(5)s(2)U34. In Methylorubrum populi (strain ATCC BAA-705 / NCIMB 13946 / BJ001) (Methylobacterium populi), this protein is tRNA modification GTPase MnmE.